The primary structure comprises 307 residues: Protease HtpX homolog (307 aa).

2 consecutive transmembrane segments (helical) span residues 7-27 and 28-48; these read AILL…IGGA and SGAT…YWNS. His-130 lines the Zn(2+) pocket. Glu-131 is a catalytic residue. Position 134 (His-134) interacts with Zn(2+). 2 helical membrane passes run 145 to 165 and 171 to 191; these read ITAT…FFGG and GPGI…AMLV. Position 200 (Glu-200) interacts with Zn(2+). A disordered region spans residues 277 to 307; sequence AGQSGGGLAPGGPPPDPSSPWNKGSRRGPWG.

This sequence belongs to the peptidase M48B family. The cofactor is Zn(2+).

The protein resides in the cell inner membrane. The chain is Protease HtpX homolog from Nitrobacter winogradskyi (strain ATCC 25391 / DSM 10237 / CIP 104748 / NCIMB 11846 / Nb-255).